A 176-amino-acid chain; its full sequence is MQDRRSSYDYEDLLACGRGELFGAGNAQLPLPPMLMFDRITEINDSGGEHGKGLIRAELDVNPDLWFFACHFKGDPVMPGCLGLDAMWQLVGFFLGWSGGLGPGRALGLGELKFSGQVQPNIKKVVYNIDVKRVMRSKLWLGIADGTMAADGEIFYRAKDLKVGLFRQDAAVQPAV.

The active site involves His-71.

It belongs to the thioester dehydratase family. FabA subfamily. As to quaternary structure, homodimer.

It localises to the cytoplasm. It carries out the reaction a (3R)-hydroxyacyl-[ACP] = a (2E)-enoyl-[ACP] + H2O. The enzyme catalyses (3R)-hydroxydecanoyl-[ACP] = (2E)-decenoyl-[ACP] + H2O. It catalyses the reaction (2E)-decenoyl-[ACP] = (3Z)-decenoyl-[ACP]. It functions in the pathway lipid metabolism; fatty acid biosynthesis. Necessary for the introduction of cis unsaturation into fatty acids. Catalyzes the dehydration of (3R)-3-hydroxydecanoyl-ACP to E-(2)-decenoyl-ACP and then its isomerization to Z-(3)-decenoyl-ACP. Can catalyze the dehydratase reaction for beta-hydroxyacyl-ACPs with saturated chain lengths up to 16:0, being most active on intermediate chain length. The polypeptide is 3-hydroxydecanoyl-[acyl-carrier-protein] dehydratase (Rhodopseudomonas palustris (strain HaA2)).